Consider the following 448-residue polypeptide: Ribosome biogenesis protein YTM1 (448 aa).

Residues 5-86 (TSNQAVVFST…EETLEIEYIE (82 aa)) form a ubiquitin-like (UBL) domain region. WD repeat units lie at residues 98 to 136 (PHESWVSAVSCSLPTHFLTTAYDGHLRAFDLSKNVTLDA), 191 to 230 (LHTAPVSSIAANPSGTQLLTSSWDSLIGVWDTTIPPKHEV), 271 to 309 (SHIGRVSKVAWLSPTQGVSCGFDSTLRTWDVERGLCTRT), 312 to 351 (ASEKPFLDLAVNVENQTALTVSTDRTMTLYDLRTEEALSA), 357 to 397 (LHPA…AAIS), and 403 to 439 (DGTKKVLAVDWKRGVIGIGGEGGLDVWKVGLENETQG). Residues 225-261 (PPKHEVPEPTITAADQRTKKRRKVDPSSGDSSSPTAI) are disordered.

Belongs to the WD repeat WDR12/YTM1 family. Component of the NOP7 complex, composed of ERB1, NOP7 and YTM1. The complex is held together by ERB1, which interacts with NOP7 via its N-terminal domain and with YTM1 via a high-affinity interaction between the seven-bladed beta-propeller domains of the 2 proteins. The NOP7 complex associates with the 66S pre-ribosome. Interacts (via UBL domain) with MDN1 (via VWFA/MIDAS domain).

The protein resides in the nucleus. Its subcellular location is the nucleolus. The protein localises to the nucleoplasm. Functionally, component of the NOP7 complex, which is required for maturation of the 25S and 5.8S ribosomal RNAs and formation of the 60S ribosome. This chain is Ribosome biogenesis protein YTM1, found in Coprinopsis cinerea (strain Okayama-7 / 130 / ATCC MYA-4618 / FGSC 9003) (Inky cap fungus).